Reading from the N-terminus, the 293-residue chain is 5'-3' exoribonuclease Rnm (293 aa).

9 residues coordinate Mn(2+): His13, His15, Asp20, His45, Glu72, His83, His198, Asp255, and His257.

This sequence belongs to the PHP family. TrpH/YciV subfamily. Mn(2+) serves as cofactor.

The catalysed reaction is a ribonucleoside 3',5'-bisphosphate + H2O = a ribonucleoside 5'-phosphate + phosphate. Its function is as follows. Exoribonuclease that catalyzes the last steps of 5S, 16S and 23S rRNA 5'-end maturation. Removes 3 nucleotides (nt) from the 5' end of 5S, 16S and 23S rRNA precursors to generate the mature 5' ends. Precursors with longer extensions are not processed (7 nt at the 5' end of pre-23S rRNA or 66 nt at the 5'-end of 16S rRNA are not processed). 5S and 23S rRNA maturation occurs more efficiently and accurately on ribosomal particles as compared to free RNA; the enzyme overdigests free RNA but generates the correct 5'-end in ribosomes from rnm deletion strains. Efficiently catalyzes the hydrolysis of the 3'-phosphate from 3',5'-bis-phosphonucleotides as well as the successive hydrolysis of 5'-phosphomononucleotides from the 5'-end of short pieces of RNA and DNA, with no specificity toward the identity of the nucleotide base. Is more efficient at hydrolyzing RNA oligonucleotides than DNA oligonucleotides. This enzyme can also hydrolyze annealed DNA duplexes, albeit at a catalytic efficiency approximately 10-fold lower than that of the corresponding single-stranded oligonucleotides. In Escherichia coli (strain K12), this protein is 5'-3' exoribonuclease Rnm.